The following is a 426-amino-acid chain: Protein sum2 (426 aa).

The Sm domain maps to 1–80 (MTEFIGSRIS…VKDLRIEEPA (80 aa)). 3 disordered regions span residues 79–100 (PATT…IGSN), 204–305 (GMPS…AKPR), and 348–426 (SCES…ANDQ). Residues 84–93 (SAPPVQPPND) show a composition bias toward pro residues. Residues 226–237 (VSASPSLQSMPP) show a composition bias toward polar residues. Over residues 261–278 (RNSTVTNDRVVNTTVDVS) the composition is skewed to low complexity. The segment covering 279-298 (QSQTVETSGPSKEVPTTQPD) has biased composition (polar residues). The region spanning 296–332 (QPDASAAKPRTEFDFQTANQKFQSMKDDLLKGKNDEE) is the DFDF domain. The FFD box signature appears at 335-351 (EFYKPKQSFFDNISCES). The segment covering 350–371 (ESKEKGMEAADRRALRDRERSL) has biased composition (basic and acidic residues). The short motif at 360-380 (DRRALRDRERSLNMETFGVAG) is the TFG box element. Residues 384-401 (RGRRGRGRGRGGRGRGRG) are compositionally biased toward basic residues. Residues 405–426 (NQYNQYRNSNGSQPRAQPANDQ) show a composition bias toward polar residues.

Its function is as follows. Required for G2/M phase checkpoint control. This is Protein sum2 (sum2) from Schizosaccharomyces pombe (strain 972 / ATCC 24843) (Fission yeast).